Reading from the N-terminus, the 137-residue chain is Putative pre-16S rRNA nuclease (137 aa).

It belongs to the YqgF nuclease family.

It is found in the cytoplasm. Functionally, could be a nuclease involved in processing of the 5'-end of pre-16S rRNA. This is Putative pre-16S rRNA nuclease from Bacillus cytotoxicus (strain DSM 22905 / CIP 110041 / 391-98 / NVH 391-98).